Reading from the N-terminus, the 262-residue chain is Ribosomal RNA small subunit methyltransferase A (262 aa).

Positions 13, 15, 40, 61, 85, and 103 each coordinate S-adenosyl-L-methionine.

This sequence belongs to the class I-like SAM-binding methyltransferase superfamily. rRNA adenine N(6)-methyltransferase family. RsmA subfamily.

Its subcellular location is the cytoplasm. The enzyme catalyses adenosine(1518)/adenosine(1519) in 16S rRNA + 4 S-adenosyl-L-methionine = N(6)-dimethyladenosine(1518)/N(6)-dimethyladenosine(1519) in 16S rRNA + 4 S-adenosyl-L-homocysteine + 4 H(+). Functionally, specifically dimethylates two adjacent adenosines (A1518 and A1519) in the loop of a conserved hairpin near the 3'-end of 16S rRNA in the 30S particle. May play a critical role in biogenesis of 30S subunits. This is Ribosomal RNA small subunit methyltransferase A from Bordetella avium (strain 197N).